Reading from the N-terminus, the 611-residue chain is POU domain, class 6, transcription factor 1 (611 aa).

Residues 62–93 (ASQAAGEAGPDNLGSSAEATVKSPPGIPPSPA) are disordered. The 75-residue stretch at 449 to 523 (EDGINLEEIR…VLEKWLNEAE (75 aa)) folds into the POU-specific domain. The segment at residues 544–603 (KRKRRTSFTPQAIEALNAYFEKNPLPTGQEITEIAKELNYDREVVRVWFCNRRQTLKNTS) is a DNA-binding region (homeobox).

Belongs to the POU transcription factor family. Class-6 subfamily. As to expression, in the embryo, expressed exclusively in the developing brain, whereas in the adult its expression is restricted to brain, heart, skeletal muscle and lung. In the brain, the highest expression levels are found in specific cell layers of the cortex, the olfactory bulb, the hippocampus and the cerebellum.

The protein resides in the nucleus. In terms of biological role, transcription factor that binds preferentially to a variant of the octamer motif (5'-ATGATAAT-3'). In Homo sapiens (Human), this protein is POU domain, class 6, transcription factor 1 (POU6F1).